The primary structure comprises 580 residues: Acyl-coenzyme A synthetase ACSM4, mitochondrial (580 aa).

Residues 1 to 22 (MKVLLHCQRLRFIWLAKPAGRH) constitute a mitochondrion transit peptide. ATP contacts are provided by residues 229-237 (TSGTTGSPK), 368-373 (EGYGQT), aspartate 455, arginine 470, and lysine 566.

The protein belongs to the ATP-dependent AMP-binding enzyme family. Mg(2+) serves as cofactor. Mn(2+) is required as a cofactor.

It is found in the mitochondrion. The enzyme catalyses a medium-chain fatty acid + ATP + CoA = a medium-chain fatty acyl-CoA + AMP + diphosphate. It carries out the reaction hexanoate + ATP + CoA = hexanoyl-CoA + AMP + diphosphate. It catalyses the reaction octanoate + ATP + CoA = octanoyl-CoA + AMP + diphosphate. The catalysed reaction is decanoate + ATP + CoA = decanoyl-CoA + AMP + diphosphate. The enzyme catalyses dodecanoate + ATP + CoA = dodecanoyl-CoA + AMP + diphosphate. Catalyzes the activation of fatty acids by CoA to produce an acyl-CoA, the first step in fatty acid metabolism. Capable of activating medium-chain fatty acids with a preference for C6-12 fatty acids. The protein is Acyl-coenzyme A synthetase ACSM4, mitochondrial (Acsm4) of Mus musculus (Mouse).